The following is a 624-amino-acid chain: Mannosyl-oligosaccharide 1,2-alpha-mannosidase MNS3 (624 aa).

The Cytoplasmic segment spans residues 1–43 (MSKSLPYSVKDIHYDNAKFRHRSPLKVFSQSLLTLSTKRNYAS). The helical; Signal-anchor for type II membrane protein transmembrane segment at 44 to 64 (CSTGKFLILILFFGVACLMLM) threads the bilayer. The Lumenal portion of the chain corresponds to 65–624 (SKSPNESGLN…AHPLPIRRNT (560 aa)). N-linked (GlcNAc...) asparagine glycans are attached at residues asparagine 69 and asparagine 114. The interval 91–123 (LRKPPRLPPRLSPDEGQLRGSSTNGSTISNSDP) is disordered. The span at 110-121 (GSSTNGSTISNS) shows a compositional bias: low complexity. Catalysis depends on glutamate 212, which acts as the Proton donor. N-linked (GlcNAc...) asparagine glycosylation is present at asparagine 236. The active site involves aspartate 357. Asparagine 377 carries an N-linked (GlcNAc...) asparagine glycan. A disulfide bond links cysteine 428 and cysteine 471. Glutamate 485 (proton donor) is an active-site residue. Asparagine 503 carries an N-linked (GlcNAc...) asparagine glycan. The active site involves glutamate 526. A Ca(2+)-binding site is contributed by threonine 613.

It belongs to the glycosyl hydrolase 47 family. Ca(2+) serves as cofactor. It depends on Mn(2+) as a cofactor. The cofactor is Mg(2+). Expressed in flowers, siliques, stems, leaves, roots, stamens and sepals.

The protein resides in the golgi apparatus. It is found in the cis-Golgi network membrane. The catalysed reaction is N(4)-(alpha-D-Man-(1-&gt;2)-alpha-D-Man-(1-&gt;2)-alpha-D-Man-(1-&gt;3)-[alpha-D-Man-(1-&gt;2)-alpha-D-Man-(1-&gt;3)-[alpha-D-Man-(1-&gt;2)-alpha-D-Man-(1-&gt;6)]-alpha-D-Man-(1-&gt;6)]-beta-D-Man-(1-&gt;4)-beta-D-GlcNAc-(1-&gt;4)-beta-D-GlcNAc)-L-asparaginyl-[protein] (N-glucan mannose isomer 9A1,2,3B1,2,3) + 4 H2O = N(4)-(alpha-D-Man-(1-&gt;3)-[alpha-D-Man-(1-&gt;3)-[alpha-D-Man-(1-&gt;6)]-alpha-D-Man-(1-&gt;6)]-beta-D-Man-(1-&gt;4)-beta-D-GlcNAc-(1-&gt;4)-beta-D-GlcNAc)-L-asparaginyl-[protein] (N-glucan mannose isomer 5A1,2) + 4 beta-D-mannose. It carries out the reaction N(4)-(alpha-D-Man-(1-&gt;2)-alpha-D-Man-(1-&gt;2)-alpha-D-Man-(1-&gt;3)-[alpha-D-Man-(1-&gt;3)-[alpha-D-Man-(1-&gt;2)-alpha-D-Man-(1-&gt;6)]-alpha-D-Man-(1-&gt;6)]-beta-D-Man-(1-&gt;4)-beta-D-GlcNAc-(1-&gt;4)-beta-D-GlcNAc)-L-asparaginyl-[protein] (N-glucan mannose isomer 8A1,2,3B1,3) + 3 H2O = N(4)-(alpha-D-Man-(1-&gt;3)-[alpha-D-Man-(1-&gt;3)-[alpha-D-Man-(1-&gt;6)]-alpha-D-Man-(1-&gt;6)]-beta-D-Man-(1-&gt;4)-beta-D-GlcNAc-(1-&gt;4)-beta-D-GlcNAc)-L-asparaginyl-[protein] (N-glucan mannose isomer 5A1,2) + 3 beta-D-mannose. It catalyses the reaction N(4)-(alpha-D-Man-(1-&gt;2)-alpha-D-Man-(1-&gt;2)-alpha-D-Man-(1-&gt;3)-[alpha-D-Man-(1-&gt;2)-alpha-D-Man-(1-&gt;3)-[alpha-D-Man-(1-&gt;2)-alpha-D-Man-(1-&gt;6)]-alpha-D-Man-(1-&gt;6)]-beta-D-Man-(1-&gt;4)-beta-D-GlcNAc-(1-&gt;4)-beta-D-GlcNAc)-L-asparaginyl-[protein] (N-glucan mannose isomer 9A1,2,3B1,2,3) + H2O = N(4)-(alpha-D-Man-(1-&gt;2)-alpha-D-Man-(1-&gt;2)-alpha-D-Man-(1-&gt;3)-[alpha-D-Man-(1-&gt;3)-[alpha-D-Man-(1-&gt;2)-alpha-D-Man-(1-&gt;6)]-alpha-D-Man-(1-&gt;6)]-beta-D-Man-(1-&gt;4)-beta-D-GlcNAc-(1-&gt;4)-beta-D-GlcNAc)-L-asparaginyl-[protein] (N-glucan mannose isomer 8A1,2,3B1,3) + beta-D-mannose. The protein operates within protein modification; protein glycosylation. With respect to regulation, inhibited by kifunensine and 1-deoxymannojirimycin, but not by swainsonine. Class I alpha-mannosidase essential for early N-glycan processing. Removes preferentially alpha-1,2-linked mannose residues from Man(9)GlcNAc(2) to produce Man(8)GlcNAc(2). Involved in root development and cell wall biosynthesis. This Arabidopsis thaliana (Mouse-ear cress) protein is Mannosyl-oligosaccharide 1,2-alpha-mannosidase MNS3 (MNS3).